The sequence spans 484 residues: Glutamate--tRNA ligase (484 aa).

The short motif at 11 to 21 is the 'HIGH' region element; the sequence is PSPTGLLHIGN. The 'KMSKS' region motif lies at 255–259; that stretch reads KLSKR. Lys258 provides a ligand contact to ATP.

Belongs to the class-I aminoacyl-tRNA synthetase family. Glutamate--tRNA ligase type 1 subfamily. Monomer.

The protein localises to the cytoplasm. The catalysed reaction is tRNA(Glu) + L-glutamate + ATP = L-glutamyl-tRNA(Glu) + AMP + diphosphate. Functionally, catalyzes the attachment of glutamate to tRNA(Glu) in a two-step reaction: glutamate is first activated by ATP to form Glu-AMP and then transferred to the acceptor end of tRNA(Glu). In Streptococcus agalactiae serotype Ia (strain ATCC 27591 / A909 / CDC SS700), this protein is Glutamate--tRNA ligase.